The chain runs to 217 residues: MRVKICGITQPDQGVAIATLGADALGFICVSQSPRYVTPQQIQVVTQALPTQTLKGEPLTRIGVFANAALDLIQQTVEVGQLTGVQLHGDESPEFCQQVKAKLPKVELIKAFRVRSAETLAQITPYEAIANTLLLDAYTPQALGGTGHTWDWTLLKTFTPKLPWFLAGGLTPDNVTPAITTLTPSGIDLSSGVEQSPGNKDLQKVKQLFQQVHTLVI.

The protein belongs to the TrpF family.

The catalysed reaction is N-(5-phospho-beta-D-ribosyl)anthranilate = 1-(2-carboxyphenylamino)-1-deoxy-D-ribulose 5-phosphate. It functions in the pathway amino-acid biosynthesis; L-tryptophan biosynthesis; L-tryptophan from chorismate: step 3/5. The protein is N-(5'-phosphoribosyl)anthranilate isomerase of Acaryochloris marina (strain MBIC 11017).